Here is a 283-residue protein sequence, read N- to C-terminus: Pantothenate synthetase (283 aa).

ATP is bound at residue 30–37; it reads MGNLHAGH. His37 functions as the Proton donor in the catalytic mechanism. Gln61 is a binding site for (R)-pantoate. Gln61 contributes to the beta-alanine binding site. An ATP-binding site is contributed by 149–152; sequence GQKD. Gln155 provides a ligand contact to (R)-pantoate. ATP contacts are provided by residues Val178 and 186-189; that span reads LSSR.

It belongs to the pantothenate synthetase family. Homodimer.

Its subcellular location is the cytoplasm. It catalyses the reaction (R)-pantoate + beta-alanine + ATP = (R)-pantothenate + AMP + diphosphate + H(+). It participates in cofactor biosynthesis; (R)-pantothenate biosynthesis; (R)-pantothenate from (R)-pantoate and beta-alanine: step 1/1. Its function is as follows. Catalyzes the condensation of pantoate with beta-alanine in an ATP-dependent reaction via a pantoyl-adenylate intermediate. This is Pantothenate synthetase from Hydrogenovibrio crunogenus (strain DSM 25203 / XCL-2) (Thiomicrospira crunogena).